Reading from the N-terminus, the 3680-residue chain is Dystrophin (3680 aa).

The segment at 1–237 (MLWWEEVEDC…ILMYITSLFQ (237 aa)) is actin-binding. Calponin-homology (CH) domains lie at 15–119 (DVQK…LHWQ) and 134–240 (TNSE…QVLP). Residues 63–72 (PKEKGSTRVH) form an ANK2- and ANK-3 binding region. Residues 310 to 323 (TSDPTRSPLPSQHL) are compositionally biased toward polar residues. Residues 310 to 332 (TSDPTRSPLPSQHLETPEDKSFG) are disordered. Spectrin repeat units follow at residues 340–448 (ANLD…NLHK), 449–557 (VLMD…LLQD), 560–668 (LKWQ…QISQ), 720–829 (EIRK…WLEY), 831–935 (NNII…ELQT), 944–1047 (RYQE…KLEE), 1050–1156 (AKLR…ALKG), 1159–1265 (DKTV…TLEE), 1268–1369 (ACWH…LLEQ), 1370–1465 (SIQS…LFQK), 1470–1570 (EQRL…QLEK), 1573–1678 (KLSR…LLLE), 1681–1780 (KHME…KASI), 1781–1876 (PLKE…KALE), 1879–1981 (HQWY…TVHE), 1994–2103 (EISY…RFDR), 2106–2210 (EKWR…RLEE), 2213–2320 (NILS…EIEA), 2321–2418 (HVKD…LRAK), 2470–2572 (FNRA…QLTE), 2575–2681 (KDST…ALEE), 2684–2797 (RLLQ…HLEA), 2803–2925 (KRLH…RKID), and 2930–3035 (RLQE…QLHE). Residues 1418 to 1915 (DLTSHEISLE…PEPRDERKIK (498 aa)) are interaction with SYNM. The WW domain maps to 3050 to 3083 (TSVQGPWERAISPNKVPYYINHETQTTCWDHPKM). Positions 3053–3403 (QGPWERAISP…TVLEGDNMET (351 aa)) are interaction with SYNM. Residues 3303 to 3359 (KHQAKCNICKECPIIGFRYRSLKHFNYDICQSCFFSGRVAKGHKMHYPMVEYCTPTT) form a ZZ-type; degenerate zinc finger. Residues C3308, C3311, C3332, and C3335 each coordinate Zn(2+). The tract at residues 3461-3513 (DDEHLLIQHYWRSLNQESPLSQPRSPAQILISLESEERGELERILADLEGRNR) is binds to SNTB1. S3478, S3485, and S3495 each carry phosphoserine. Disordered regions lie at residues 3524–3549 (QQHE…QSPR) and 3595–3680 (PQAE…EDTM). 2 stretches are compositionally biased toward polar residues: residues 3602–3621 (NGTT…SSQP) and 3658–3668 (LNHSFPSSRGR). 6 positions are modified to phosphoserine: S3607, S3608, S3612, S3618, S3619, and S3661.

Interacts with SYNM. Interacts with the syntrophins SNTG1 and SNTG2. Interacts with KRT19. Component of the dystrophin-associated glycoprotein complex which is composed of three subcomplexes: a cytoplasmic complex comprised of DMD (or UTRN), DTNA and a number of syntrophins, such as SNTB1, SNTB2, SNTG1 and SNTG2, the transmembrane dystroglycan complex, and the sarcoglycan-sarcospan complex. Interacts with DAG1 (betaDAG1) with DMD; the interaction is inhibited by phosphorylation on the PPXY motif of DAG1. Interacts with SYNM; SNTA1 and SNTB1. Interacts with CMYA5. Directly interacts with ANK2 and ANK3; these interactions do not interfere with betaDAG1-binding and are necessary for proper localization in muscle cells. Identified in a dystroglycan complex that contains at least PRX, DRP2, UTRN, DMD and DAG1. Interacts with DTNB. Interacts with PGM5; the interaction is direct. Interacts with NOS1; localizes NOS1 to sarcolemma in muscle cells.

The protein resides in the cell membrane. Its subcellular location is the sarcolemma. It localises to the cytoplasm. It is found in the cytoskeleton. The protein localises to the postsynaptic cell membrane. Anchors the extracellular matrix to the cytoskeleton via F-actin. Ligand for dystroglycan. Component of the dystrophin-associated glycoprotein complex which accumulates at the neuromuscular junction (NMJ) and at a variety of synapses in the peripheral and central nervous systems and has a structural function in stabilizing the sarcolemma. Also implicated in signaling events and synaptic transmission. This Canis lupus familiaris (Dog) protein is Dystrophin (DMD).